We begin with the raw amino-acid sequence, 541 residues long: Chaperonin GroEL 2 (541 aa).

Residues 30 to 33 (TLGP), Lys51, 87 to 91 (DGTTT), Gly415, and Asp496 each bind ATP.

It belongs to the chaperonin (HSP60) family. Forms a cylinder of 14 subunits composed of two heptameric rings stacked back-to-back. Interacts with the co-chaperonin GroES.

It localises to the cytoplasm. It catalyses the reaction ATP + H2O + a folded polypeptide = ADP + phosphate + an unfolded polypeptide.. In terms of biological role, together with its co-chaperonin GroES, plays an essential role in assisting protein folding. The GroEL-GroES system forms a nano-cage that allows encapsulation of the non-native substrate proteins and provides a physical environment optimized to promote and accelerate protein folding. In Bradyrhizobium sp. (strain BTAi1 / ATCC BAA-1182), this protein is Chaperonin GroEL 2.